A 257-amino-acid polypeptide reads, in one-letter code: 7-carboxy-7-deazaguanine synthase (257 aa).

Residues 1–25 are disordered; it reads MKSVDHPVDVLPAEHSAETPGDARA. Residues 39 to 41 and R54 contribute to the substrate site; that span reads RQG. The Radical SAM core domain maps to 45-244; sequence LTGTESVFIR…AISRGYQYCD (200 aa). Residues C58, C62, and C65 each contribute to the [4Fe-4S] cluster site. T67 is a binding site for Mg(2+). T99 contributes to the substrate binding site. S-adenosyl-L-methionine-binding positions include G101 and 143-145; that span reads SPK.

Belongs to the radical SAM superfamily. 7-carboxy-7-deazaguanine synthase family. Homodimer. [4Fe-4S] cluster is required as a cofactor. The cofactor is S-adenosyl-L-methionine. Requires Mg(2+) as cofactor.

It carries out the reaction 6-carboxy-5,6,7,8-tetrahydropterin + H(+) = 7-carboxy-7-deazaguanine + NH4(+). Its pathway is purine metabolism; 7-cyano-7-deazaguanine biosynthesis. In terms of biological role, catalyzes the complex heterocyclic radical-mediated conversion of 6-carboxy-5,6,7,8-tetrahydropterin (CPH4) to 7-carboxy-7-deazaguanine (CDG), a step common to the biosynthetic pathways of all 7-deazapurine-containing compounds. The sequence is that of 7-carboxy-7-deazaguanine synthase from Rhodopirellula baltica (strain DSM 10527 / NCIMB 13988 / SH1).